Consider the following 356-residue polypeptide: Dynein axonemal heavy chain 12 (356 aa).

6 ANK repeats span residues 17–46, 50–81, 82–111, 124–153, 154–183, and 185–218; these read DSSSILLEAASGGNPDSVTLLLEYGADANV, SGHLPIHVAADRGHLLALKTLVPVTDFAAIKR, SGISPIHCAAAGAHPKCLELLIQAGFDVNF, HRKSALYFAVSNGDLSSVKLLLSAGAMPNQ, DPVNCLQIALRMGNYELVSLLLRHGANVNY, and CRVNPLHFPSALQYTLKDEVMLRMLLNYGYDTEL. The SOCS box domain maps to 290–345; the sequence is WSEIHFILTNPRSLKHLCRLKIRKCMGRLRLRCPVFMSFLPLPSRLKAYVLYKEYD.

It belongs to the dynein heavy chain family. Consists of at least two heavy chains and a number of intermediate and light chains.

The protein localises to the cytoplasm. It localises to the cytoskeleton. Its subcellular location is the cilium axoneme. Its pathway is protein modification; protein ubiquitination. Force generating protein of respiratory cilia. Produces force towards the minus ends of microtubules. Dynein has ATPase activity; the force-producing power stroke is thought to occur on release of ADP. Involved in sperm motility; implicated in sperm flagellar assembly. Functionally, may be a substrate-recognition component of a SCF-like ECS (Elongin-Cullin-SOCS-box protein) E3 ubiquitin-protein ligase complex which mediates the ubiquitination and subsequent proteasomal degradation of target proteins. The sequence is that of Dynein axonemal heavy chain 12 (DNAH12) from Bos taurus (Bovine).